The chain runs to 152 residues: Large ribosomal subunit protein bL9 (152 aa).

The protein belongs to the bacterial ribosomal protein bL9 family.

Functionally, binds to the 23S rRNA. This is Large ribosomal subunit protein bL9 from Microcystis aeruginosa (strain NIES-843 / IAM M-2473).